The chain runs to 160 residues: Large ribosomal subunit protein uL16 (160 aa).

This sequence belongs to the universal ribosomal protein uL16 family. In terms of assembly, part of the 50S ribosomal subunit.

In terms of biological role, binds 23S rRNA and is also seen to make contacts with the A and possibly P site tRNAs. This is Large ribosomal subunit protein uL16 from Prochlorococcus marinus (strain MIT 9515).